The following is a 289-amino-acid chain: Serine/threonine-protein phosphatase Pgam5, mitochondrial (289 aa).

A helical transmembrane segment spans residues 7–23; the sequence is FACGTGAGLLTFYLTKL.

It belongs to the phosphoglycerate mutase family. BPG-dependent PGAM subfamily. Interacts with Pk92B/ASK1.

The protein resides in the mitochondrion outer membrane. The catalysed reaction is O-phospho-L-seryl-[protein] + H2O = L-seryl-[protein] + phosphate. It catalyses the reaction O-phospho-L-threonyl-[protein] + H2O = L-threonyl-[protein] + phosphate. Displays phosphatase activity for serine/threonine residues, and dephosphorylates and activates Pk92B kinase. Has apparently no phosphoglycerate mutase activity. This Drosophila persimilis (Fruit fly) protein is Serine/threonine-protein phosphatase Pgam5, mitochondrial.